The sequence spans 219 residues: Nuclear transcription factor Y subunit B-8 (219 aa).

The tract at residues 1–26 (MPDSDNDSGGPSNYAGGELSSPREQD) is disordered. A DNA-binding region spans residues 29-35 (LPIANVS). The interval 56 to 67 (VQECVSEFISFI) is subunit association domain (SAD). Positions 119 to 134 (AAASTTGAGTSAASTT) are enriched in low complexity. Disordered stretches follow at residues 119 to 142 (AAAS…QHTA) and 166 to 219 (GQPM…NRGA). Over residues 190–206 (GGRGGFGHHPGGGGGGS) the composition is skewed to gly residues.

The protein belongs to the NFYB/HAP3 subunit family. In terms of assembly, heterotrimeric transcription factor composed of three components, NF-YA, NF-YB and NF-YC. NF-YB and NF-YC must interact and dimerize for NF-YA association and DNA binding. Interacts with NFYC2, NFYC4 and NFYC6.

The protein localises to the cytoplasm. In terms of biological role, component of the NF-Y/HAP transcription factor complex. This Oryza sativa subsp. japonica (Rice) protein is Nuclear transcription factor Y subunit B-8.